We begin with the raw amino-acid sequence, 187 residues long: UPF0301 protein Sala_0165 (187 aa).

Belongs to the UPF0301 (AlgH) family.

This Sphingopyxis alaskensis (strain DSM 13593 / LMG 18877 / RB2256) (Sphingomonas alaskensis) protein is UPF0301 protein Sala_0165.